The following is a 667-amino-acid chain: MGKVIGIDLGTTNSVVAVMEGDDPEVIENAEGSRTTPSVVAYKDDGERLVGAPAKRQAITNPENTVSSIKRFMGRFYDEVEDEIEEVPYEVVRGENDTARVQIGDRKYTPQEISAVVLQKLKQTAEDYLGQEVTDAVITVPAYFNDAQRKATQEAGEIAGLNVQRIINEPTAASLAYGLDDESDQVVAVYDLGGGTFDVSILELGDGVFEVNATYGDTHLGGDNFDKRLIDHIADEFEQDTGIDLRDDPMALQRLKEAAEEAKIELSSAKTTTINLPFITATDEGPQHLNMDLNRATFENLIEDLVEKTVPQMEKALDDAGHSKSDVDEVILVGGSTRVPLVQETVEDFFGKQANKSVNPDEVVSLGAAVQGGVLSGDVDDVLLLDVTPLNLGIETLGGVMTTLIEANTTIPTKESEVFSTAADNQTSVEVHVLQGDREMAKDNRTLGRFHLDGIPPAPRGTPQIEVTFDINADGILNVSAEDKDTGKEQSIRVEANSGLSDEEIEKMKEEAEQHAEEDERRKERADTINEANSMAYSVEQGLEEYGDKIPEDKRSTLQEALDALNEELETASADEDITALEDALEELNAAWSAAGEEIREAQQQQAQQGAAAGAGAGAAGAGAAAGAEGPAGGPTGGPASGNGAADSDEEDVQDADYEVVDEGDDE.

Thr-196 carries the phosphothreonine; by autocatalysis modification. 2 disordered regions span residues 495–525 (EANS…RKER) and 595–667 (AGEE…GDDE). A compositionally biased stretch (basic and acidic residues) spans 506–525 (EKMKEEAEQHAEEDERRKER). The span at 595 to 612 (AGEEIREAQQQQAQQGAA) shows a compositional bias: low complexity. Over residues 630 to 641 (GPAGGPTGGPAS) the composition is skewed to gly residues. Residues 647–667 (DSDEEDVQDADYEVVDEGDDE) show a composition bias toward acidic residues.

Belongs to the heat shock protein 70 family.

Acts as a chaperone. This chain is Chaperone protein DnaK, found in Salinibacter ruber (strain DSM 13855 / M31).